The sequence spans 401 residues: Imidazolonepropionase (401 aa).

2 residues coordinate Fe(3+): His66 and His68. 2 residues coordinate Zn(2+): His66 and His68. 4-imidazolone-5-propanoate-binding residues include Arg75, Tyr138, and His171. Tyr138 contacts N-formimidoyl-L-glutamate. Fe(3+) is bound at residue His236. His236 contributes to the Zn(2+) binding site. Gln239 is a binding site for 4-imidazolone-5-propanoate. Fe(3+) is bound at residue Asp311. Asp311 is a binding site for Zn(2+). Residues Asn313 and Gly315 each coordinate N-formimidoyl-L-glutamate. 4-imidazolone-5-propanoate is bound at residue Thr316.

Belongs to the metallo-dependent hydrolases superfamily. HutI family. It depends on Zn(2+) as a cofactor. Fe(3+) serves as cofactor.

The protein localises to the cytoplasm. It catalyses the reaction 4-imidazolone-5-propanoate + H2O = N-formimidoyl-L-glutamate. Its pathway is amino-acid degradation; L-histidine degradation into L-glutamate; N-formimidoyl-L-glutamate from L-histidine: step 3/3. Catalyzes the hydrolytic cleavage of the carbon-nitrogen bond in imidazolone-5-propanoate to yield N-formimidoyl-L-glutamate. It is the third step in the universal histidine degradation pathway. This is Imidazolonepropionase from Pseudomonas putida (strain GB-1).